Reading from the N-terminus, the 404-residue chain is Sorting nexin-5 (404 aa).

N-acetylalanine is present on A2. One can recognise a PX domain in the interval 25-172; that stretch reads LNVDPSLQID…HVFLEYDQDL (148 aa). A 1,2-diacyl-sn-glycero-3-phospho-(1D-myo-inositol-4,5-bisphosphate)-binding positions include 40–46, 99–105, and 113–116; these read SERDKVK, FDGPREK, and EGSM. The segment at 169 to 261 is interaction with DOCK1; it reads DQDLSVRRKN…HSLALEEPTV (93 aa). The membrane-binding amphipathic helix stretch occupies residues 183 to 200; it reads FGGFFKSVVKSADEVLFS. At S193 the chain carries Phosphoserine. The 203-residue stretch at 202 to 404 folds into the BAR domain; the sequence is VKEVDDFFEQ…QSCIDLFKNN (203 aa). K275 bears the N6-acetyllysine mark.

This sequence belongs to the sorting nexin family. As to quaternary structure, forms heterodimers with BAR domain-containing sorting nexins SNX1 and SNX2; does not homodimerize. The heterodimers are proposed to self-assemble into helical arrays on the membrane to stabilize and expand local membrane curvature underlying endosomal tubule formation. Thought to be a component of the originally described retromer complex (also called SNX-BAR retromer) which is a pentamer containing the heterotrimeric retromer cargo-selective complex (CSC), also described as vacuolar protein sorting subcomplex (VPS), and a heterodimeric membrane-deforming subcomplex formed between SNX1 or SNX2 and SNX5 or SNX6 (also called SNX-BAR subcomplex); the respective CSC and SNX-BAR subcomplexes associate with low affinity. Interacts with SNX1, SNX2, VPS26A, VPS29, VPS35, DCTN1, DOCK1, MIB1, PIP5K1C. Interacts with HGS; increased by PIP5K1C kinase activity and by PtdIns(3P) and/or PtdIns(3,4)P2. As to expression, detected in macrophages (at protein level).

It localises to the endosome. The protein resides in the early endosome. Its subcellular location is the early endosome membrane. The protein localises to the cell membrane. It is found in the cytoplasmic vesicle membrane. It localises to the cytoplasm. The protein resides in the cell projection. Its subcellular location is the phagocytic cup. The protein localises to the ruffle. Involved in several stages of intracellular trafficking. Interacts with membranes containing phosphatidylinositol lipids. Acts in part as component of the retromer membrane-deforming SNX-BAR subcomplex. The SNX-BAR retromer mediates retrograde transport of cargo proteins from endosomes to the trans-Golgi network (TGN) and is involved in endosome-to-plasma membrane transport for cargo protein recycling. The SNX-BAR subcomplex functions to deform the donor membrane into a tubular profile called endosome-to-TGN transport carrier (ETC). Does not have in vitro vesicle-to-membrane remodeling activity. Involved in retrograde transport of lysosomal enzyme receptor IGF2R. May function as link between endosomal transport vesicles and dynactin. Plays a role in the internalization of EGFR after EGF stimulation. Involved in EGFR endosomal sorting and degradation; the function involves PIP5K1C and is retromer-independent. Together with PIP5K1C facilitates HGS interaction with ubiquitinated EGFR, which initiates EGFR sorting to intraluminal vesicles (ILVs) of the multivesicular body for subsequent lysosomal degradation. Involved in E-cadherin sorting and degradation; inhibits PIP5K1C-mediated E-cadherin degradation. Plays a role in macropinocytosis. The sequence is that of Sorting nexin-5 (Snx5) from Mus musculus (Mouse).